Here is a 268-residue protein sequence, read N- to C-terminus: Exopolysaccharide production negative regulator (268 aa).

A signal peptide spans 1-22 (MRAGELKSLRVAVLGMSLAVGA).

Functionally, negatively modulates exopolysaccharide (EPS) biosynthesis. In Rhizobium meliloti (strain 1021) (Ensifer meliloti), this protein is Exopolysaccharide production negative regulator (exoR).